The sequence spans 380 residues: RNA-binding motif protein, Y chromosome (380 aa).

The region spanning G8–R86 is the RRM domain. Disordered regions lie at residues K82–R226 and H279–S358. Positions R166–G178 are enriched in polar residues. Composition is skewed to basic and acidic residues over residues R180 to S190 and I333 to K351.

In terms of assembly, interacts with SRSF3/SRP20, SRSF9/SRP30, SRSF5/SRP40, and SRSF6/SRP55; this interaction inhibits SRSF family member pre-mRNA splicing. Interacts with splicing factor proteins and KHDRBS3. Testis-specific.

The protein localises to the nucleus. In terms of biological role, RNA-binding protein involved in pre-mRNA splicing. Required for sperm development. Acts additively with TRA2B to promote exon 7 inclusion of the survival motor neuron SMN. Binds non-specifically to mRNAs. This is RNA-binding motif protein, Y chromosome from Mus musculus (Mouse).